A 109-amino-acid polypeptide reads, in one-letter code: Large ribosomal subunit protein eL30 (109 aa).

It belongs to the eukaryotic ribosomal protein eL30 family. Component of the large ribosomal subunit (LSU). Mature N.crassa ribosomes consist of a small (40S) and a large (60S) subunit. The 40S small subunit contains 1 molecule of ribosomal RNA (18S rRNA) and at least 32 different proteins. The large 60S subunit contains 3 rRNA molecules (26S, 5.8S and 5S rRNA) and at least 42 different proteins.

It localises to the cytoplasm. Component of the ribosome, a large ribonucleoprotein complex responsible for the synthesis of proteins in the cell. The small ribosomal subunit (SSU) binds messenger RNAs (mRNAs) and translates the encoded message by selecting cognate aminoacyl-transfer RNA (tRNA) molecules. The large subunit (LSU) contains the ribosomal catalytic site termed the peptidyl transferase center (PTC), which catalyzes the formation of peptide bonds, thereby polymerizing the amino acids delivered by tRNAs into a polypeptide chain. The nascent polypeptides leave the ribosome through a tunnel in the LSU and interact with protein factors that function in enzymatic processing, targeting, and the membrane insertion of nascent chains at the exit of the ribosomal tunnel. This chain is Large ribosomal subunit protein eL30 (rpl-30), found in Neurospora crassa (strain ATCC 24698 / 74-OR23-1A / CBS 708.71 / DSM 1257 / FGSC 987).